The chain runs to 537 residues: Mitochondria-eating protein (537 aa).

Positions 1-273 are interaction with YWHAG/14-3-3 protein gamma; that stretch reads MADNLRRLVS…PCSRSHSRSR (273 aa). Phosphoserine occurs at positions 85, 127, 154, and 157. The stretch at 115-253 forms a coiled coil; the sequence is GTRDIQQLDA…SAEKSVLQGR (139 aa). 2 disordered regions span residues 171 to 221 and 249 to 293; these read QLKS…ANQR and VLQG…AKLS. Basic and acidic residues predominate over residues 179 to 217; the sequence is EESRHRNSDRRRSEKRGSERRRVELRGSEQRVSDLDRRS. A compositionally biased stretch (low complexity) spans 253–287; the sequence is RSARSRSPSPAPCSRSHSRSRSTSPSSAKARTPSP. Phosphoserine occurs at positions 286 and 508.

The protein belongs to the MIEAP family. In terms of assembly, interacts (via coiled-coil domains) with BNIP3L (via BH3 domain). Interacts (via coiled-coil domains) with BNIP3 (via BH3 domain). Interacts with YWHAG/14-3-3 protein gamma; a protein that also plays a role in MALM.

The protein resides in the cytoplasm. Its subcellular location is the cytosol. The protein localises to the mitochondrion outer membrane. It localises to the mitochondrion matrix. Functionally, key regulator of mitochondrial quality that mediates the repairing or degradation of unhealthy mitochondria in response to mitochondrial damage. Mediator of mitochondrial protein catabolic process (also named MALM) by mediating the degradation of damaged proteins inside mitochondria by promoting the accumulation in the mitochondrial matrix of hydrolases that are characteristic of the lysosomal lumen. Also involved in mitochondrion degradation of damaged mitochondria by promoting the formation of vacuole-like structures (named MIV), which engulf and degrade unhealthy mitochondria by accumulating lysosomes. The physical interaction of SPATA18/MIEAP, BNIP3 and BNIP3L/NIX at the mitochondrial outer membrane regulates the opening of a pore in the mitochondrial double membrane in order to mediate the translocation of lysosomal proteins from the cytoplasm to the mitochondrial matrix. Binds cardiolipin. May form molecular condensates (non-membrane-bounded organelles) within mitochondria that compartmentalize and promote cardiolipin metabolism. This Bos taurus (Bovine) protein is Mitochondria-eating protein (SPATA18).